A 274-amino-acid chain; its full sequence is Reaction center protein L chain (274 aa).

Residues 2 to 32 (ALLSFERKYRVRGGTLIGGDLFDFWVGPYFV) lie on the Cytoplasmic side of the membrane. Residues 33–53 (GFFGVSAIFFIFLGVSLIGYA) traverse the membrane as a helical segment. The Periplasmic portion of the chain corresponds to 54–83 (ASQGPTWDPFAISINPPDLKYGLGAAPLLE). A helical membrane pass occupies residues 84-111 (GGFWQAITVCALGAFISWMLREVEISRK). Residues 112–115 (LGIG) are Cytoplasmic-facing. The helical transmembrane segment at 116-139 (WHVPLAFCVPIFMFCVLQVFRPLL) threads the bilayer. Residues 140–170 (LGSWGHAFPYGILSHLDWVNNFGYQYLNWHY) lie on the Periplasmic side of the membrane. Residues His-154 and His-174 each contribute to the (7R,8Z)-bacteriochlorophyll b site. The chain crosses the membrane as a helical span at residues 171-198 (NPGHMSSVSFLFVNAMALGLHGGLILSV). His-191 provides a ligand contact to Fe cation. Residues 199–225 (ANPGDGDKVKTAEHENQYFRDVVGYSI) are Cytoplasmic-facing. Position 217 (Phe-217) interacts with a ubiquinone. The helical transmembrane segment at 226 to 249 (GALSIHRLGLFLASNIFLTGAFGT) threads the bilayer. His-231 provides a ligand contact to Fe cation. At 250–274 (IASGPFWTRGWPEWWGWWLDIPFWS) the chain is on the periplasmic side.

It belongs to the reaction center PufL/M/PsbA/D family. In terms of assembly, reaction center is composed of four bacteriochlorophylls, two bacteriopheophytins, two ubiquinones, one iron, and three highly hydrophobic polypeptide chains (designated L, M, and H).

The protein resides in the cellular chromatophore membrane. Its function is as follows. The reaction center is a membrane-bound complex that mediates the initial photochemical event in the electron transfer process of photosynthesis. The sequence is that of Reaction center protein L chain (pufL) from Blastochloris viridis (Rhodopseudomonas viridis).